The primary structure comprises 194 residues: Thymidine kinase (194 aa).

Residues 15 to 22 (GSMFSGKS) and 88 to 91 (DEVQ) contribute to the ATP site. The active-site Proton acceptor is glutamate 89. The Zn(2+) site is built by cysteine 145, cysteine 148, cysteine 183, and histidine 186.

Belongs to the thymidine kinase family. As to quaternary structure, homotetramer.

The protein resides in the cytoplasm. The enzyme catalyses thymidine + ATP = dTMP + ADP + H(+). This chain is Thymidine kinase, found in Bacillus licheniformis (strain ATCC 14580 / DSM 13 / JCM 2505 / CCUG 7422 / NBRC 12200 / NCIMB 9375 / NCTC 10341 / NRRL NRS-1264 / Gibson 46).